Consider the following 225-residue polypeptide: MSETAPAPAAEAAPAAAPAPAKAAAKKPKKAAGGAKARKPAGPSVTELITKAVSASKERKGLSLAALKKALAAGGYDVEKNNSRIKLGLKSLVSKGTLVQTKGTGASGSFRLSKKPGEVKEKAPKKKASAAKPKKPAAKKPAAAAKKPKKAVAVKKSPKKAKKPAASATKKSAKSPKKVTKAVKPKKAVAAKSPAKAKAVKPKAAKPKAAKPKAAKAKKAAAKKK.

Composition is skewed to low complexity over residues 1–23 and 31–43; these read MSET…PAKA and AAGG…PAGP. Disordered stretches follow at residues 1-46 and 94-225; these read MSET…PSVT and SKGT…AKKK. S2 carries the N-acetylserine modification. The H15 domain maps to 41–114; that stretch reads AGPSVTELIT…GASGSFRLSK (74 aa). Composition is skewed to basic residues over residues 123–138, 146–163, 171–189, and 198–225; these read APKK…KPAA, KKPK…KAKK, KSAK…KKAV, and KAVK…AKKK.

This sequence belongs to the histone H1/H5 family.

It is found in the nucleus. The protein localises to the chromosome. Histones H1 are necessary for the condensation of nucleosome chains into higher-order structures. In Gallus gallus (Chicken), this protein is Histone H1.11L.